We begin with the raw amino-acid sequence, 171 residues long: Adenine phosphoribosyltransferase (171 aa).

The protein belongs to the purine/pyrimidine phosphoribosyltransferase family. As to quaternary structure, homodimer.

It is found in the cytoplasm. The enzyme catalyses AMP + diphosphate = 5-phospho-alpha-D-ribose 1-diphosphate + adenine. Its pathway is purine metabolism; AMP biosynthesis via salvage pathway; AMP from adenine: step 1/1. Catalyzes a salvage reaction resulting in the formation of AMP, that is energically less costly than de novo synthesis. This Syntrophotalea carbinolica (strain DSM 2380 / NBRC 103641 / GraBd1) (Pelobacter carbinolicus) protein is Adenine phosphoribosyltransferase.